Here is a 245-residue protein sequence, read N- to C-terminus: Lytic switch protein BZLF1 (245 aa).

Positions 1–167 (MMDPNSTSED…RTRKPLQPES (167 aa)) are transactivation. 2 positions are modified to phosphothreonine: T14 and T159. The interval 145–167 (GAPQPAPAAAPARRTRKPLQPES) is disordered. The Bipartite nuclear localization signal signature appears at 157–194 (RRTRKPLQPESLEECDSELEIKRYKNRVASRKCRAKFK). S167, S173, and S186 each carry phosphoserine. Positions 178 to 195 (KRYKNRVASRKCRAKFKH) are basic motif. The bZIP domain maps to 178-228 (KRYKNRVASRKCRAKFKHLLQHYREVASAKSSENDRLRLLLKQMCPSLDVD). The segment at 196–228 (LLQHYREVASAKSSENDRLRLLLKQMCPSLDVD) is leucine-zipper. The segment at 229–245 (SIIPRTPDVLHEDLLNF) is accessory activation domain.

This sequence belongs to the bZIP family. Homodimer. Interacts (via b-ZIP domain) with the DNA polymerase processivity factor BMRF1 (via N-terminus); this interaction may inhibit BZLF1-induced transcription of the BMRF1 promoter. Interacts with human UBN1, CRTC2 and RACK1. Interacts (via N-terminus) with human PAX5 (via N-terminus); this interaction inhibits BZLF1-mediated lytic viral reactivation. Interacts (via leucine-zipper domain) with host CEBPA; this interaction induces G1 host cell cycle arrest. Interacts (via C-terminus) with host TP53BP1 (via C-terminus); this interaction is involved in the activation of the viral lytic cycle. Interacts with host chromatin-remodeling ATPase INO80; this interaction participates to the activation of early lytic viral genes by BZLF1. Interacts with host regulator of chromatin SMARCA5/hSNF2H; this interaction participates to the activation of early lytic viral genes by BZLF1. Interacts with host PLSCR1/Phospholipid scramblase 1; this interaction negatively regulates the transcriptional regulatory activity of BZLF1 by preventing the formation of the BZLF1-CBP complex.

It localises to the host nucleus. Transcription factor that acts as a molecular switch to induce the transition from the latent to the lytic or productive phase of the virus cycle. Mediates the switch from the latent to the lytic cycle of infection in cells containing a highly methylated viral genome. Probably binds to silenced chromatin and recruits host chromatin-remodeling enzymes. Regulates this switch by binding to 2 types of ZEBRA response elements (ZREs): the CpG-free AP-1 like elements (latency) and the methylated CpG-containing elements (lytic replication). Activates preferentially the methylated forms of the viral lytic R (BRLF1) and Na (BRRF1) gene promoters, the latters being the first genes activated during Z-mediated reactivation in latently infected cells. BZLF1 and BRLF1 act together to trigger lytic replication. Also binds the lytic origin of replication, oriLyt. Induces G1 cell cycle arrest by stabilizing the host CCAAT/enhancer binding protein CEBPA. This function is important because the lytic cycle preferentially takes place in host cells arrested in G1. The protein is Lytic switch protein BZLF1 of Homo sapiens (Human).